The following is a 68-amino-acid chain: Guanine nucleotide-binding protein G(I)/G(S)/G(O) subunit gamma-5B (68 aa).

The 66-residue stretch at 3–68 folds into the G protein gamma domain; it reads GFSSVAATKK…FRPQKVCSFL (66 aa). A Cysteine methyl ester modification is found at cysteine 65. A lipid anchor (S-geranylgeranyl cysteine) is attached at cysteine 65. Positions 66–68 are cleaved as a propeptide — removed in mature form; that stretch reads SFL.

It belongs to the G protein gamma family. In terms of assembly, g proteins are composed of 3 units; alpha, beta and gamma.

The protein localises to the cell membrane. Its function is as follows. Guanine nucleotide-binding proteins (G proteins) are involved as a modulator or transducer in various transmembrane signaling systems. The beta and gamma chains are required for the GTPase activity, for replacement of GDP by GTP, and for G protein-effector interaction. The protein is Guanine nucleotide-binding protein G(I)/G(S)/G(O) subunit gamma-5B of Homo sapiens (Human).